A 362-amino-acid chain; its full sequence is Probable endopolygalacturonase B (362 aa).

Positions 1-20 (MHFLQNAFVAATMGAAPAAA) are cleaved as a signal peptide. Residues 21-25 (TPLEK) constitute a propeptide that is removed on maturation. Cysteine 28 and cysteine 43 are joined by a disulfide. PbH1 repeat units follow at residues 155-184 (ADHL…DIGQ), 185-206 (STYI…AINS), 207-227 (GEHI…SIGS), 236-257 (VNDV…RIKT), 265-287 (VENV…VVEQ), and 299-344 (TNGV…DVTG). Catalysis depends on aspartate 199, which acts as the Proton donor. An intrachain disulfide couples cysteine 201 to cysteine 217. Histidine 221 is an active-site residue. A disulfide bridge connects residues cysteine 327 and cysteine 332. N-linked (GlcNAc...) asparagine glycosylation is present at asparagine 334. An intrachain disulfide couples cysteine 351 to cysteine 360.

The protein belongs to the glycosyl hydrolase 28 family.

It localises to the secreted. It carries out the reaction (1,4-alpha-D-galacturonosyl)n+m + H2O = (1,4-alpha-D-galacturonosyl)n + (1,4-alpha-D-galacturonosyl)m.. Functionally, involved in maceration and soft-rotting of plant tissue. Hydrolyzes the 1,4-alpha glycosidic bonds of de-esterified pectate in the smooth region of the plant cell wall. The sequence is that of Probable endopolygalacturonase B (pgaB) from Aspergillus kawachii (White koji mold).